The sequence spans 318 residues: Taste receptor type 2 member 7 (318 aa).

At M1 to L9 the chain is on the extracellular side. Residues L10–V30 traverse the membrane as a helical segment. At N31–R55 the chain is on the cytoplasmic side. The helical transmembrane segment at I56 to Y76 threads the bilayer. Over A77–H94 the chain is Extracellular. Residues L95 to F115 form a helical membrane-spanning segment. Over H116–R128 the chain is Cytoplasmic. Residues V129–T149 form a helical membrane-spanning segment. Over E150–N187 the chain is Extracellular. A glycan (N-linked (GlcNAc...) asparagine) is linked at N167. The chain crosses the membrane as a helical span at residues L188–L208. The Cytoplasmic portion of the chain corresponds to W209–K235. A helical transmembrane segment spans residues A236–S256. Topologically, residues S257 to A266 are extracellular. The helical transmembrane segment at V267 to L287 threads the bilayer. At G288–I318 the chain is on the cytoplasmic side.

It belongs to the G-protein coupled receptor T2R family.

Its subcellular location is the membrane. Functionally, gustducin-coupled receptor implicated in the perception of bitter compounds in the oral cavity and the gastrointestinal tract. Signals through PLCB2 and the calcium-regulated cation channel TRPM5. The polypeptide is Taste receptor type 2 member 7 (TAS2R7) (Macaca mulatta (Rhesus macaque)).